Reading from the N-terminus, the 227-residue chain is LysM and putative peptidoglycan-binding domain-containing protein 1 (227 aa).

Residues 1–11 (MASPSRQPPPG) show a composition bias toward pro residues. The segment at 1–20 (MASPSRQPPPGGSGLLHGSR) is disordered. Residues Ser23 and Ser33 each carry the phosphoserine modification. Residues 40–84 (LEHQLEPGDTLAGLALKYGVTMEQIKRANRLYTNDSIFLKKTLYI) enclose the LysM domain. The disordered stretch occupies residues 95-150 (NGLDSEEEKDGEEEVRPSNDEVWPHSTERKKQETGAGRANGEVFPTPGQETPTPIH). Over residues 98–107 (DSEEEKDGEE) the composition is skewed to acidic residues. The residue at position 99 (Ser99) is a Phosphoserine. Residues 108 to 127 (EVRPSNDEVWPHSTERKKQE) are compositionally biased toward basic and acidic residues. Phosphoserine occurs at positions 166, 181, 194, and 212. Residues 172–196 (AAQKLKKGESGVPGEDAGLHLSSPR) form a disordered region.

The chain is LysM and putative peptidoglycan-binding domain-containing protein 1 (LYSMD1) from Macaca fascicularis (Crab-eating macaque).